The following is a 63-amino-acid chain: Large ribosomal subunit protein bL28 (63 aa).

The tract at residues 1 to 22 (MSRRCAITGKSAMNGHSVSHAN) is disordered.

Belongs to the bacterial ribosomal protein bL28 family.

This is Large ribosomal subunit protein bL28 from Campylobacter hominis (strain ATCC BAA-381 / DSM 21671 / CCUG 45161 / LMG 19568 / NCTC 13146 / CH001A).